We begin with the raw amino-acid sequence, 303 residues long: Probable 5-dehydro-4-deoxyglucarate dehydratase (303 aa).

It belongs to the DapA family.

It carries out the reaction 5-dehydro-4-deoxy-D-glucarate + H(+) = 2,5-dioxopentanoate + CO2 + H2O. It functions in the pathway carbohydrate acid metabolism; D-glucarate degradation; 2,5-dioxopentanoate from D-glucarate: step 2/2. This is Probable 5-dehydro-4-deoxyglucarate dehydratase from Acinetobacter baumannii (strain SDF).